The primary structure comprises 537 residues: 6-phosphogluconate dehydrogenase, decarboxylating 2, chloroplastic (537 aa).

The N-terminal 44 residues, 1 to 44 (MRSEVPSSTSPSFLSPPFIHLPLLSLSSPTPLPHSSSSTFSLFS), are a transit peptide targeting the chloroplast. NADP(+) contacts are provided by residues 55–60 (GLAVMG), 78–80 (NRT), 122–124 (VKA), and asparagine 150. Residues asparagine 150 and 176 to 178 (SGG) each bind substrate. Lysine 230 functions as the Proton acceptor in the catalytic mechanism. 233–234 (HN) lines the substrate pocket. Glutamate 237 serves as the catalytic Proton donor. The substrate site is built by tyrosine 238, lysine 308, arginine 335, arginine 500, and histidine 506.

It belongs to the 6-phosphogluconate dehydrogenase family. Homodimer.

It is found in the plastid. Its subcellular location is the chloroplast. The enzyme catalyses 6-phospho-D-gluconate + NADP(+) = D-ribulose 5-phosphate + CO2 + NADPH. Its pathway is carbohydrate degradation; pentose phosphate pathway; D-ribulose 5-phosphate from D-glucose 6-phosphate (oxidative stage): step 3/3. Catalyzes the oxidative decarboxylation of 6-phosphogluconate to ribulose 5-phosphate and CO(2), with concomitant reduction of NADP to NADPH. The sequence is that of 6-phosphogluconate dehydrogenase, decarboxylating 2, chloroplastic from Spinacia oleracea (Spinach).